Here is an 85-residue protein sequence, read N- to C-terminus: UPF0297 protein CPR_1749 (85 aa).

It belongs to the UPF0297 family.

In Clostridium perfringens (strain SM101 / Type A), this protein is UPF0297 protein CPR_1749.